A 560-amino-acid chain; its full sequence is DNA ligase B (560 aa).

Catalysis depends on Lys124, which acts as the N6-AMP-lysine intermediate.

The protein belongs to the NAD-dependent DNA ligase family. LigB subfamily.

It carries out the reaction NAD(+) + (deoxyribonucleotide)n-3'-hydroxyl + 5'-phospho-(deoxyribonucleotide)m = (deoxyribonucleotide)n+m + AMP + beta-nicotinamide D-nucleotide.. Functionally, catalyzes the formation of phosphodiester linkages between 5'-phosphoryl and 3'-hydroxyl groups in double-stranded DNA using NAD as a coenzyme and as the energy source for the reaction. The protein is DNA ligase B of Escherichia coli O6:K15:H31 (strain 536 / UPEC).